The chain runs to 379 residues: tRNA-specific 2-thiouridylase MnmA (379 aa).

Residues 23 to 30 (AMSGGVDS) and Leu-49 each bind ATP. Cys-117 (nucleophile) is an active-site residue. A disulfide bridge connects residues Cys-117 and Cys-214. Position 141 (Gly-141) interacts with ATP. Residues 163-165 (RDQ) are interaction with tRNA. Residue Cys-214 is the Cysteine persulfide intermediate of the active site.

It belongs to the MnmA/TRMU family.

Its subcellular location is the cytoplasm. The enzyme catalyses S-sulfanyl-L-cysteinyl-[protein] + uridine(34) in tRNA + AH2 + ATP = 2-thiouridine(34) in tRNA + L-cysteinyl-[protein] + A + AMP + diphosphate + H(+). Functionally, catalyzes the 2-thiolation of uridine at the wobble position (U34) of tRNA, leading to the formation of s(2)U34. The polypeptide is tRNA-specific 2-thiouridylase MnmA (Cereibacter sphaeroides (strain ATCC 17023 / DSM 158 / JCM 6121 / CCUG 31486 / LMG 2827 / NBRC 12203 / NCIMB 8253 / ATH 2.4.1.) (Rhodobacter sphaeroides)).